We begin with the raw amino-acid sequence, 234 residues long: Purine nucleoside phosphorylase DeoD-type (234 aa).

His5 contributes to the a purine D-ribonucleoside binding site. Phosphate-binding positions include Gly21, Arg25, Arg44, and 88-91; that span reads RIGT. Residues 180-182 and 204-205 contribute to the a purine D-ribonucleoside site; these read DME and SD. The active-site Proton donor is Asp205.

This sequence belongs to the PNP/UDP phosphorylase family. In terms of assembly, homohexamer; trimer of homodimers.

It carries out the reaction a purine D-ribonucleoside + phosphate = a purine nucleobase + alpha-D-ribose 1-phosphate. The catalysed reaction is a purine 2'-deoxy-D-ribonucleoside + phosphate = a purine nucleobase + 2-deoxy-alpha-D-ribose 1-phosphate. Its function is as follows. Catalyzes the reversible phosphorolytic breakdown of the N-glycosidic bond in the beta-(deoxy)ribonucleoside molecules, with the formation of the corresponding free purine bases and pentose-1-phosphate. In Buchnera aphidicola subsp. Acyrthosiphon pisum (strain 5A), this protein is Purine nucleoside phosphorylase DeoD-type.